Here is a 697-residue protein sequence, read N- to C-terminus: Pentatricopeptide repeat-containing protein 1, mitochondrial (697 aa).

The N-terminal 36 residues, 1 to 36 (MLKRAHYVALHVTLNHNGLSYQRVFSCLTQFPMLRH), are a transit peptide targeting the mitochondrion. PPR repeat units follow at residues 257-288 (RPFT…VKNK) and 294-328 (SDVF…NVNF).

Its subcellular location is the mitochondrion. Mitochondrial RNA-binding protein required for the stability of the cox2 and cox3 mRNAs. In Schizosaccharomyces pombe (strain 972 / ATCC 24843) (Fission yeast), this protein is Pentatricopeptide repeat-containing protein 1, mitochondrial (ppr1).